We begin with the raw amino-acid sequence, 302 residues long: MTKTKAIDIIGAPSTFGQRKLGVDLGPTAIRYAGLISRLKQLDLDVYDKGDIKVPAVNIEKFHSEQKGLRNYDEIIDVNQKLNKEVSASIENNRFPLVLGGDHSIAVGSVSAISKHYNNLGVIWYDAHGDLNIPEESPSGNIHGMPLRILTGEGPKELLELNSNVIKPENIVLIGMRDLDKGERQFIKDHNIKTFTMSDIDKLGIKEVIENTIEYLKSRNVDGVHLSLDVDALDPLETPGTGTRVLGGLSYRESHFALELLHQSHLISSMDLVEVNPLIDSNNHTAEQAVSLVGTFFGETLL.

Residues H103, D126, H128, and D130 each contribute to the Mn(2+) site. Substrate contacts are provided by residues H128 to N132, S139 to N141, and D180. Residues D229 and D231 each contribute to the Mn(2+) site. T243 and E274 together coordinate substrate.

The protein belongs to the arginase family. Requires Mn(2+) as cofactor.

It catalyses the reaction L-arginine + H2O = urea + L-ornithine. Its pathway is nitrogen metabolism; urea cycle; L-ornithine and urea from L-arginine: step 1/1. This Staphylococcus aureus (strain COL) protein is Arginase (arg).